Reading from the N-terminus, the 127-residue chain is Classical arabinogalactan protein 10 (127 aa).

An N-terminal signal peptide occupies residues 1–21 (MASKSVVVLLFLALIASSAIA). Q22 carries the post-translational modification Pyrrolidone carboxylic acid. The segment at 22–107 (QAPGPAPTRS…TGSTPVDNNN (86 aa)) is disordered. P24, P26, P28, P32, and P36 each carry 4-hydroxyproline. O-linked (Ara...) hydroxyproline glycans are attached at residues P24, P26, P28, P32, and P36. Pro residues-rich tracts occupy residues 25–39 (GPAPTRSPLPSPAQP), 48–58 (SITPTPTPTPS), and 66–86 (VSPPAGSPLPSSASPPAPPTS). Residues 98–107 (TGSTPVDNNN) show a composition bias toward polar residues. N107 carries GPI-anchor amidated asparagine lipidation. The propeptide at 108–127 (AATLAAGSLAGFVFVASLLL) is removed in mature form.

It belongs to the classical AGP family. Post-translationally, O-glycosylated on hydroxyprolines; noncontiguous hydroxylproline residues are glycosylated with arabinogalactan. In terms of tissue distribution, predominantly expressed in flowers and at a lower level in roots and siliques.

The protein resides in the cell membrane. Its function is as follows. Proteoglycan that seems to be implicated in diverse developmental roles such as differentiation, cell-cell recognition, embryogenesis and programmed cell death. This Arabidopsis thaliana (Mouse-ear cress) protein is Classical arabinogalactan protein 10 (AGP10).